A 246-amino-acid chain; its full sequence is Small ribosomal subunit protein uS2 (246 aa).

This sequence belongs to the universal ribosomal protein uS2 family.

This is Small ribosomal subunit protein uS2 from Pseudomonas aeruginosa (strain LESB58).